Consider the following 1154-residue polypeptide: Nitric oxide synthase, inducible (1154 aa).

The interval 22 to 58 (KDINNNVEKPPGATPSPSTQDDLKNHKHHNDSPQPLT) is disordered. The short motif at 23–27 (DINNN) is the DINNN-motif; mediates interaction with SPSB1, SPSB2 and SPSB4 element. Zn(2+) is bound by residues Cys-107 and Cys-112. Residue Cys-197 participates in heme b binding. The L-arginine site is built by Gln-260, Trp-369, Tyr-370, and Glu-374. (6R)-L-erythro-5,6,7,8-tetrahydrobiopterin-binding residues include Arg-378, Ile-459, Trp-460, and Phe-473. A heme b-binding site is contributed by Tyr-488. A calmodulin-binding region spans residues 512-532 (LKVLVKAVLFASMLMRKTMAS). Positions 536–674 (VTILFATETG…AFRCWAVQTF (139 aa)) constitute a Flavodoxin-like domain. Thr-542, Glu-543, Thr-544, Lys-546, and Ser-547 together coordinate FMN. Position 572 is a phosphotyrosine (Tyr-572). FMN contacts are provided by Ser-588, Thr-589, Ser-625, Cys-632, and Glu-658. One can recognise an FAD-binding FR-type domain in the interval 727–967 (KNVFTLRLKS…VRSAGNFKLP (241 aa)). Arg-747 provides a ligand contact to NADP(+). Residues His-769, Arg-903, Tyr-905, Ser-906, Thr-921, Ala-923, Tyr-927, Val-940, Cys-941, and Ser-942 each coordinate FAD. The NADP(+) site is built by Thr-981, Arg-1014, Ser-1043, Arg-1044, Lys-1050, Tyr-1052, Gln-1054, and Asp-1087.

It belongs to the NOS family. Homodimer. Interacts with NHERF1. Interacts with GAPDH; induced by oxidatively-modified low-densitity lipoprotein (LDL(ox)). Interacts with S100A8 and S100A9 to form the iNOS-S100A8/9 transnitrosylase complex. Interacts with SPSB1, SPSB2 and SPSB4. Interacts with ELOC and CUL5 in the presence of SPSB1 or SPSB2 or SPSB4. Forms a complex with ASL, ASS1 and HSP90AA1; the complex regulates cell-autonomous L-arginine synthesis and citrulline recycling while channeling extracellular L-arginine to nitric oxide synthesis pathway. The cofactor is heme b. FAD is required as a cofactor. It depends on FMN as a cofactor. (6R)-L-erythro-5,6,7,8-tetrahydrobiopterin serves as cofactor. In terms of processing, polyubiquitinated; mediated by SPSB1, SPSB2 and SPSB4, leading to proteasomal degradation.

The protein localises to the cytoplasm. Its subcellular location is the cytosol. It carries out the reaction 2 L-arginine + 3 NADPH + 4 O2 + H(+) = 2 L-citrulline + 2 nitric oxide + 3 NADP(+) + 4 H2O. With respect to regulation, regulated by calcium/calmodulin. Its function is as follows. Produces nitric oxide (NO) which is a messenger molecule with diverse functions throughout the body. In macrophages, NO mediates tumoricidal and bactericidal actions. Also has nitrosylase activity and mediates cysteine S-nitrosylation of cytoplasmic target proteins such PTGS2/COX2. As component of the iNOS-S100A8/9 transnitrosylase complex involved in the selective inflammatory stimulus-dependent S-nitrosylation of GAPDH implicated in regulation of the GAIT complex activity and probably multiple targets including ANXA5, EZR, MSN and VIM. Involved in inflammation, enhances the synthesis of pro-inflammatory mediators such as IL6 and IL8. This chain is Nitric oxide synthase, inducible (NOS2), found in Canis lupus familiaris (Dog).